Reading from the N-terminus, the 124-residue chain is Nascent polypeptide-associated complex protein (124 aa).

The NAC-A/B domain occupies 7–74 (GLNPRKMKQM…PESRERGDSG (68 aa)). The tract at residues 53 to 124 (AQGQQTYQVV…DLAAAVQKLE (72 aa)) is disordered. The span at 74 to 93 (GSEDDSETESGGEFSEDDVE) shows a compositional bias: acidic residues.

The protein belongs to the NAC-alpha family. In terms of assembly, homodimer. Interacts with the ribosome. Binds ribosomal RNA.

In terms of biological role, contacts the emerging nascent chain on the ribosome. This is Nascent polypeptide-associated complex protein from Natronomonas pharaonis (strain ATCC 35678 / DSM 2160 / CIP 103997 / JCM 8858 / NBRC 14720 / NCIMB 2260 / Gabara) (Halobacterium pharaonis).